A 286-amino-acid chain; its full sequence is ATP synthase gamma chain (286 aa).

This sequence belongs to the ATPase gamma chain family. F-type ATPases have 2 components, CF(1) - the catalytic core - and CF(0) - the membrane proton channel. CF(1) has five subunits: alpha(3), beta(3), gamma(1), delta(1), epsilon(1). CF(0) has three main subunits: a, b and c.

It is found in the cell inner membrane. Functionally, produces ATP from ADP in the presence of a proton gradient across the membrane. The gamma chain is believed to be important in regulating ATPase activity and the flow of protons through the CF(0) complex. This is ATP synthase gamma chain from Flavobacterium johnsoniae (strain ATCC 17061 / DSM 2064 / JCM 8514 / BCRC 14874 / CCUG 350202 / NBRC 14942 / NCIMB 11054 / UW101) (Cytophaga johnsonae).